The chain runs to 421 residues: Testin (421 aa).

In terms of domain architecture, PET spans 92–199 (MILTNPVAAK…GDVKLPCEMD (108 aa)). The segment at 133–164 (EKQPVAGSEGAQYRKKQLAKQLPAHDQDPSKC) is disordered. Positions 155–164 (PAHDQDPSKC) are enriched in basic and acidic residues. LIM zinc-binding domains follow at residues 234–297 (YSCY…CDSE), 299–359 (PRCA…NHAV), and 362–421 (QGCH…KMMS).

It belongs to the prickle / espinas / testin family. Interacts via LIM domain 1 with ZYX. Interacts (via LIM domain 3) with ENAH and VASP. Interacts with ALKBH4, talin, actin, alpha-actinin, GRIP1 and PXN. Interacts (via LIM domain 2) with ACTL7A (via N-terminus). Heterodimer with ACTL7A; the heterodimer interacts with ENAH to form a heterotrimer.

It is found in the cytoplasm. The protein localises to the cell junction. It localises to the focal adhesion. Functionally, scaffold protein that may play a role in cell adhesion, cell spreading and in the reorganization of the actin cytoskeleton. Plays a role in the regulation of cell proliferation. May act as a tumor suppressor. This chain is Testin (TES), found in Callithrix jacchus (White-tufted-ear marmoset).